Here is a 171-residue protein sequence, read N- to C-terminus: Putative phosphoesterase BH1439 (171 aa).

H34 (proton donor) is an active-site residue. 2 short sequence motifs (HXTX) span residues 34 to 37 (HVTL) and 115 to 118 (HLTI). H115 serves as the catalytic Proton acceptor.

Belongs to the 2H phosphoesterase superfamily. YjcG family.

In Halalkalibacterium halodurans (strain ATCC BAA-125 / DSM 18197 / FERM 7344 / JCM 9153 / C-125) (Bacillus halodurans), this protein is Putative phosphoesterase BH1439.